The following is a 100-amino-acid chain: RxLR effector protein Avrblb2 (100 aa).

Residues 1–22 (MRSFLYGVLAFAVLARSSAVAA) form the signal peptide. A RxLR-dEER motif is present at residues 43–57 (RSLRIEAQEVIQSGR). The Calmodulin-binding motif motif lies at 78 to 82 (RPDIK).

It belongs to the RxLR effector family. In terms of assembly, interacts with the host papain-like cysteine protease C14. Interacts with the host calmodulin.

The protein resides in the secreted. It is found in the host cell membrane. Functionally, secreted effector that acts as an elicitor of hypersensitive response (HR) specifically on plants carrying defense protein Rpi-blb2. Enhances P.infestans colonization of Nicotiana benthamiana leaves. Interacts with, and subsequently prevents secretion into the apoplast of the host papain-like cysteine protease C14, thus promoting virulence by interfering with the execution of host defenses. Associates with calmodulin at the host plasma membrane to interfere with plant defense-associated calcium signaling in hosts. The polypeptide is RxLR effector protein Avrblb2 (Phytophthora infestans (strain T30-4) (Potato late blight agent)).